Here is a 630-residue protein sequence, read N- to C-terminus: Adagio-like protein 3 (630 aa).

Residues 54–126 (EDEAAAWEGR…PLVDPMVVSE (73 aa)) enclose the PAS domain. At C102 the chain carries S-4a-FMN cysteine. The region spanning 220 to 268 (YCCILQLSDEVLAHNILSRLSPRDVASIGSVCTRMHELTKNDHLRKMVC) is the F-box domain. Kelch repeat units follow at residues 380–430 (SWLV…CTLD), 432–483 (SKLV…SVFG), 485–537 (TKLF…RLDH), 545–597 (GRII…CVVG), and 599–629 (TRVLVLGGHTGEEWILNELHELCLASRPDED).

This sequence belongs to the ADAGIO family. FMN binds covalently to cysteine after exposure to blue light and is reversed in the dark.

It localises to the nucleus. It functions in the pathway protein modification; protein ubiquitination. In terms of biological role, component of an E3 ubiquitin ligase complex that plays a central role in blue light-dependent circadian cycles. Acts as a blue light photoreceptor, due to the presence of FMN, that mediates light-regulated protein degradation of critical clock components by targeting them to the proteasome complex. The SCF(ADO3) E3 ubiquitin ligase complex is involved in the regulation of circadian clock-dependent processes including transition to flowering time, hypocotyl elongation, cotyledons and leaf movement rhythms. The chain is Adagio-like protein 3 from Oryza sativa subsp. japonica (Rice).